A 434-amino-acid polypeptide reads, in one-letter code: Anaerobic glycerol-3-phosphate dehydrogenase subunit B (434 aa).

It belongs to the anaerobic G-3-P dehydrogenase subunit B family. Composed of a catalytic GlpA/B dimer and of membrane bound GlpC. FMN is required as a cofactor.

It carries out the reaction a quinone + sn-glycerol 3-phosphate = dihydroxyacetone phosphate + a quinol. The protein operates within polyol metabolism; glycerol degradation via glycerol kinase pathway; glycerone phosphate from sn-glycerol 3-phosphate (anaerobic route): step 1/1. Conversion of glycerol 3-phosphate to dihydroxyacetone. Uses fumarate or nitrate as electron acceptor. This is Anaerobic glycerol-3-phosphate dehydrogenase subunit B from Histophilus somni (strain 2336) (Haemophilus somnus).